Reading from the N-terminus, the 277-residue chain is Methyltransferase adrK (277 aa).

Residues 123–124 (DL), 150–151 (DV), and 151–152 (VL) each bind S-adenosyl-L-methionine.

This sequence belongs to the class I-like SAM-binding methyltransferase superfamily. As to quaternary structure, homodimer.

It functions in the pathway secondary metabolite biosynthesis; terpenoid biosynthesis. In terms of biological role, methyltransferase; part of the gene cluster that mediates the biosynthesis of andrastins, meroterpenoid compounds that exhibit inhibitory activity against ras farnesyltransferase, suggesting that they could be promising leads for antitumor agents. The first step of the pathway is the synthesis of 3,5-dimethylorsellinic acid (DMOA) by the polyketide synthase adrD via condensation of one acetyl-CoA starter unit with 3 malonyl-CoA units and 2 methylations. DMAO is then converted to farnesyl-DMAO by the prenyltransferase adrG. The methyltransferase adrK catalyzes the methylation of the carboxyl group of farnesyl-DMAO to farnesyl-DMAO methyl ester which is further converted to epoxyfarnesyl-DMAO methyl ester by the FAD-dependent monooxygenase adrH. The terpene cyclase adrI then catalyzes the carbon skeletal rearrangement to generate the andrastin E, the first compound in the pathway having the andrastin scaffold, with the tetracyclic ring system. The post-cyclization tailoring enzymes adrF, adrE, adrJ, and adrA, are involved in the conversion of andrastin E into andrastin A. The short chain dehydrogenase adrF is responsible for the oxidation of the C-3 a hydroxyl group of andrastin E to yield the corresponding ketone, andrastin D. The ketoreductase adrE stereoselectively reduces the carbonyl moiety to reverse the stereochemistry of the C-3 position to yield andrastin F. The acetyltransferase adrJ is the acetyltransferase that attaches the acetyl group to the C-3 hydroxyl group of andrastin F to yield andrastin C. Finally, the cytochrome P450 monooxygenase adrA catalyzes two sequential oxidation reactions of the C-23 methyl group, to generate the corresponding alcohol andrastin B, and aldehyde andrastin A. In Penicillium rubens (strain ATCC 28089 / DSM 1075 / NRRL 1951 / Wisconsin 54-1255) (Penicillium chrysogenum), this protein is Methyltransferase adrK.